The following is an 86-amino-acid chain: UPF0297 protein SH1302 (86 aa).

It belongs to the UPF0297 family.

The chain is UPF0297 protein SH1302 from Staphylococcus haemolyticus (strain JCSC1435).